The sequence spans 206 residues: Putative archaetidylserine decarboxylase proenzyme (206 aa).

The active-site Schiff-base intermediate with substrate; via pyruvic acid is serine 172. Serine 172 is modified (pyruvic acid (Ser); by autocatalysis).

Belongs to the phosphatidylserine decarboxylase family. PSD-A subfamily. Heterodimer of a large membrane-associated beta subunit and a small pyruvoyl-containing alpha subunit. It depends on pyruvate as a cofactor. In terms of processing, is synthesized initially as an inactive proenzyme. Formation of the active enzyme involves a self-maturation process in which the active site pyruvoyl group is generated from an internal serine residue via an autocatalytic post-translational modification. Two non-identical subunits are generated from the proenzyme in this reaction, and the pyruvate is formed at the N-terminus of the alpha chain, which is derived from the carboxyl end of the proenzyme. The post-translation cleavage follows an unusual pathway, termed non-hydrolytic serinolysis, in which the side chain hydroxyl group of the serine supplies its oxygen atom to form the C-terminus of the beta chain, while the remainder of the serine residue undergoes an oxidative deamination to produce ammonia and the pyruvoyl prosthetic group on the alpha chain.

The protein resides in the cell membrane. It catalyses the reaction archaetidylserine + H(+) = archaetidylethanolamine + CO2. In terms of biological role, catalyzes the formation of archaetidylethanolamine (PtdEtn) from archaetidylserine (PtdSer). This chain is Putative archaetidylserine decarboxylase proenzyme, found in Methanocaldococcus jannaschii (strain ATCC 43067 / DSM 2661 / JAL-1 / JCM 10045 / NBRC 100440) (Methanococcus jannaschii).